We begin with the raw amino-acid sequence, 500 residues long: Sulfate adenylyltransferase (500 aa).

The N-terminal stretch occupies residues 1 to 165; sequence MLSPHGGILQ…LEAIQLPAHY (165 aa). The catalytic stretch occupies residues 166–390; it reads DYLNLRKSPA…LRQYNPPRYR (225 aa). Residue Q193 coordinates sulfate. Residues 193–196 and 287–290 each bind ATP; these read QTRN and GRDH. Residues T194, R195, and N196 contribute to the active site. R195 contributes to the sulfate binding site. Residue A291 coordinates sulfate. Position 329 (I329) interacts with ATP. The tract at residues 391-500 is required for oligomerization; adenylyl-sulfate kinase-like; it reads QGFVIVVNHE…FLEDNKFFQF (110 aa).

This sequence belongs to the sulfate adenylyltransferase family. Homohexamer. Dimer of trimers.

Its subcellular location is the cytoplasm. The catalysed reaction is sulfate + ATP + H(+) = adenosine 5'-phosphosulfate + diphosphate. It participates in sulfur metabolism; hydrogen sulfide biosynthesis; sulfite from sulfate: step 1/3. Catalyzes the first intracellular reaction of sulfate assimilation, forming adenosine-5'-phosphosulfate (APS) from inorganic sulfate and ATP. Plays an important role in sulfate activation as a component of the biosynthesis pathway of sulfur-containing amino acids. In Eremothecium gossypii (strain ATCC 10895 / CBS 109.51 / FGSC 9923 / NRRL Y-1056) (Yeast), this protein is Sulfate adenylyltransferase.